The primary structure comprises 67 residues: Prokaryotic ubiquitin-like protein Pup (67 aa).

The tract at residues 1-26 is disordered; it reads MATKETGGQKHATRRNQEVEEIEVTT. The tract at residues 23 to 61 is ARC ATPase binding; sequence EVTTETSVRNEKLAEDVDDILDEIDEVLESNAEDFVRQF. Positions 27–55 form a coiled coil; it reads ETSVRNEKLAEDVDDILDEIDEVLESNAE. Residue Glu67 forms an Isoglutamyl lysine isopeptide (Glu-Lys) (interchain with K-? in acceptor proteins) linkage.

The protein belongs to the prokaryotic ubiquitin-like protein family. Strongly interacts with the proteasome-associated ATPase ARC through a hydrophobic interface; the interacting region of Pup lies in its C-terminal half. There is one Pup binding site per ARC hexamer ring.

It functions in the pathway protein degradation; proteasomal Pup-dependent pathway. Functionally, protein modifier that is covalently attached to lysine residues of substrate proteins, thereby targeting them for proteasomal degradation. The tagging system is termed pupylation. The sequence is that of Prokaryotic ubiquitin-like protein Pup from Thermobifida fusca (strain YX).